Consider the following 271-residue polypeptide: L-aspartate dehydrogenase (271 aa).

NAD(+) contacts are provided by Ala-124 and Asn-192. Residue His-222 is part of the active site.

The protein belongs to the L-aspartate dehydrogenase family.

The catalysed reaction is L-aspartate + NADP(+) + H2O = oxaloacetate + NH4(+) + NADPH + H(+). It carries out the reaction L-aspartate + NAD(+) + H2O = oxaloacetate + NH4(+) + NADH + H(+). Its pathway is cofactor biosynthesis; NAD(+) biosynthesis; iminoaspartate from L-aspartate (dehydrogenase route): step 1/1. Specifically catalyzes the NAD or NADP-dependent dehydrogenation of L-aspartate to iminoaspartate. The sequence is that of L-aspartate dehydrogenase from Methanosarcina acetivorans (strain ATCC 35395 / DSM 2834 / JCM 12185 / C2A).